The chain runs to 136 residues: T-cell receptor alpha chain constant (136 aa).

Residues 19 to 103 (STLCLFTDFD…LTEKSFETDM (85 aa)) enclose the Ig-like C1-type domain. Cys22 and Cys72 are disulfide-bonded. Asn66, Asn80, and Asn109 each carry an N-linked (GlcNAc...) asparagine glycan. The connecting peptide stretch occupies residues 90-111 (CDATLTEKSFETDMNLNFQNLS). Residues 111–131 (SVMGLRILLLKVAGFNLLMTL) traverse the membrane as a helical segment. Over 132–136 (RLWSS) the chain is Cytoplasmic.

As to quaternary structure, alpha-beta TR is a heterodimer composed of an alpha and beta chain; disulfide-linked. The alpha-beta TR is associated with the transmembrane signaling CD3 coreceptor proteins to form the TR-CD3 (TcR or TCR). The assembly of alpha-beta TR heterodimers with CD3 occurs in the endoplasmic reticulum where a single alpha-beta TR heterodimer associates with one CD3D-CD3E heterodimer, one CD3G-CD3E heterodimer and one CD247 homodimer forming a stable octameric structure. CD3D-CD3E and CD3G-CD3E heterodimers preferentially associate with TR alpha and TR beta chains, respectively. The association of the CD247 homodimer is the last step of TcR assembly in the endoplasmic reticulum and is required for transport to the cell surface.

It localises to the cell membrane. Its function is as follows. Constant region of T cell receptor (TR) alpha chain. Alpha-beta T cell receptors are antigen specific receptors which are essential to the immune response and are present on the cell surface of T lymphocytes. Recognize peptide-major histocompatibility (MH) (pMH) complexes that are displayed by antigen presenting cells (APC), a prerequisite for efficient T cell adaptive immunity against pathogens. Binding of alpha-beta TR to pMH complex initiates TR-CD3 clustering on the cell surface and intracellular activation of LCK that phosphorylates the ITAM motifs of CD3G, CD3D, CD3E and CD247 enabling the recruitment of ZAP70. In turn, ZAP70 phosphorylates LAT, which recruits numerous signaling molecules to form the LAT signalosome. The LAT signalosome propagates signal branching to three major signaling pathways, the calcium, the mitogen-activated protein kinase (MAPK) kinase and the nuclear factor NF-kappa-B (NF-kB) pathways, leading to the mobilization of transcription factors that are critical for gene expression and essential for T cell growth and differentiation. The T cell repertoire is generated in the thymus, by V-(D)-J rearrangement. This repertoire is then shaped by intrathymic selection events to generate a peripheral T cell pool of self-MH restricted, non-autoaggressive T cells. Post-thymic interaction of alpha-beta TR with the pMH complexes shapes TR structural and functional avidity. The chain is T-cell receptor alpha chain constant from Mus musculus (Mouse).